A 433-amino-acid polypeptide reads, in one-letter code: Histone acetyltransferase type B subunit 2 (433 aa).

WD repeat units lie at residues E131–T171, G184–R224, H234–A274, G281–H321, and G325–L365. An interaction with the histone H4 N-terminus region spans residues D367–D371. A WD 6 repeat occupies G382–D422.

It belongs to the WD repeat RBAP46/RBAP48/MSI1 family. Component of the HAT-B complex composed of at least HAT1 and HAT2. The HAT-B complex binds to histone H4 tail.

It localises to the cytoplasm. The protein localises to the nucleus. In terms of biological role, regulatory subunit of the histone acetylase B (HAT-B) complex. The complex acetylates 'Lys-12' of histone H4 which is required for telomeric silencing. This chain is Histone acetyltransferase type B subunit 2 (HAT2), found in Gibberella zeae (strain ATCC MYA-4620 / CBS 123657 / FGSC 9075 / NRRL 31084 / PH-1) (Wheat head blight fungus).